Here is a 170-residue protein sequence, read N- to C-terminus: NADH-quinone oxidoreductase subunit B (170 aa).

4 residues coordinate [4Fe-4S] cluster: Cys42, Cys43, Cys107, and Cys136.

Belongs to the complex I 20 kDa subunit family. NDH-1 is composed of 14 different subunits. Subunits NuoB, C, D, E, F, and G constitute the peripheral sector of the complex. [4Fe-4S] cluster is required as a cofactor.

Its subcellular location is the cell inner membrane. The catalysed reaction is a quinone + NADH + 5 H(+)(in) = a quinol + NAD(+) + 4 H(+)(out). NDH-1 shuttles electrons from NADH, via FMN and iron-sulfur (Fe-S) centers, to quinones in the respiratory chain. The immediate electron acceptor for the enzyme in this species is believed to be ubiquinone. Couples the redox reaction to proton translocation (for every two electrons transferred, four hydrogen ions are translocated across the cytoplasmic membrane), and thus conserves the redox energy in a proton gradient. The chain is NADH-quinone oxidoreductase subunit B from Campylobacter concisus (strain 13826).